Here is a 394-residue protein sequence, read N- to C-terminus: Small RNA 2'-O-methyltransferase (394 aa).

Residues Asp-78 and Ser-114 each coordinate S-adenosyl-L-methionine. Mg(2+) is bound by residues Glu-132, Glu-135, His-136, and His-181.

The protein belongs to the methyltransferase superfamily. HEN1 family. Requires Mg(2+) as cofactor.

The protein localises to the cytoplasm. The enzyme catalyses small RNA 3'-end nucleotide + S-adenosyl-L-methionine = small RNA 3'-end 2'-O-methylnucleotide + S-adenosyl-L-homocysteine + H(+). Methyltransferase that adds a 2'-O-methyl group at the 3'-end of piRNAs, a class of 24 to 30 nucleotide RNAs that are generated by a Dicer-independent mechanism and are primarily derived from transposons and other repeated sequence elements. This probably protects the 3'-end of piRNAs from uridylation activity and subsequent degradation. Stabilization of piRNAs is essential for gametogenesis. The protein is Small RNA 2'-O-methyltransferase (Henmt1) of Rattus norvegicus (Rat).